Reading from the N-terminus, the 227-residue chain is Prolactin (227 aa).

Residues 1 to 28 form the signal peptide; that stretch reads MNIKGSPWKGSLLLLLVSNLLLCQNVAP. Cysteines 32 and 39 form a disulfide. S54 is subject to Phosphoserine. An N-linked (GlcNAc...) asparagine glycan is attached at N59. Residues S62 and S118 each carry the phosphoserine modification. 2 cysteine pairs are disulfide-bonded: C86-C202 and C219-C227.

It belongs to the somatotropin/prolactin family. As to quaternary structure, interacts with PRLR.

Its subcellular location is the secreted. In terms of biological role, prolactin acts primarily on the mammary gland by promoting lactation. In Macaca mulatta (Rhesus macaque), this protein is Prolactin (PRL).